Reading from the N-terminus, the 453-residue chain is MNIVILAAGTGKRMRSALPKVLHPLAGRPLLSHVIDTARALAPSRLVVVIGHGAERVRAAVAAPDVQFAVQEQQLGTGHAVRQALPLLDPSQPTLVLYGDVPLTRAATLRRLADAATDARYGVLTVTLDDPTGYGRIVRDQAGCVTRIVEQKDASADELKIAEINTGIVVAPTAQLSMWLGALGNDNAQGEYYLTDVVEQAIEAGFEIVTTQPDDEWETLGVNSKAQLAELERIHQRKLAEALLADGVTLADPARIDVRGKLTCGRDVSIDVNCVFEGDVTLADGVTIGANCVIRNAAIAAGARVDAFSHLDGATLGANTVVGPYARLRPGAVLADDAHVGNFVEVKNATLGHGSKANHLTYLGDADIGARVNVGAGTITCNYDGANKFRTVIEDDVFVGSDTQFVAPVRVGRGVTVAAGTTVWKDVAEGMLVLNDKTQTAKSGYVRPVKKKS.

A pyrophosphorylase region spans residues 1–225 (MNIVILAAGT…EWETLGVNSK (225 aa)). Residues 6-9 (LAAG), Lys20, Gln71, 76-77 (GT), 98-100 (YGD), Gly135, Glu150, Asn165, and Asn223 each bind UDP-N-acetyl-alpha-D-glucosamine. Asp100 is a Mg(2+) binding site. Mg(2+) is bound at residue Asn223. The tract at residues 226 to 246 (AQLAELERIHQRKLAEALLAD) is linker. Residues 247 to 453 (GVTLADPARI…GYVRPVKKKS (207 aa)) form an N-acetyltransferase region. Residues Arg329 and Lys347 each contribute to the UDP-N-acetyl-alpha-D-glucosamine site. His359 functions as the Proton acceptor in the catalytic mechanism. 2 residues coordinate UDP-N-acetyl-alpha-D-glucosamine: Tyr362 and Asn373. Acetyl-CoA is bound by residues Ala376, 382 to 383 (NY), Ser401, and Ala419.

In the N-terminal section; belongs to the N-acetylglucosamine-1-phosphate uridyltransferase family. It in the C-terminal section; belongs to the transferase hexapeptide repeat family. As to quaternary structure, homotrimer. Mg(2+) serves as cofactor.

The protein localises to the cytoplasm. The enzyme catalyses alpha-D-glucosamine 1-phosphate + acetyl-CoA = N-acetyl-alpha-D-glucosamine 1-phosphate + CoA + H(+). The catalysed reaction is N-acetyl-alpha-D-glucosamine 1-phosphate + UTP + H(+) = UDP-N-acetyl-alpha-D-glucosamine + diphosphate. The protein operates within nucleotide-sugar biosynthesis; UDP-N-acetyl-alpha-D-glucosamine biosynthesis; N-acetyl-alpha-D-glucosamine 1-phosphate from alpha-D-glucosamine 6-phosphate (route II): step 2/2. Its pathway is nucleotide-sugar biosynthesis; UDP-N-acetyl-alpha-D-glucosamine biosynthesis; UDP-N-acetyl-alpha-D-glucosamine from N-acetyl-alpha-D-glucosamine 1-phosphate: step 1/1. It functions in the pathway bacterial outer membrane biogenesis; LPS lipid A biosynthesis. Catalyzes the last two sequential reactions in the de novo biosynthetic pathway for UDP-N-acetylglucosamine (UDP-GlcNAc). The C-terminal domain catalyzes the transfer of acetyl group from acetyl coenzyme A to glucosamine-1-phosphate (GlcN-1-P) to produce N-acetylglucosamine-1-phosphate (GlcNAc-1-P), which is converted into UDP-GlcNAc by the transfer of uridine 5-monophosphate (from uridine 5-triphosphate), a reaction catalyzed by the N-terminal domain. In Burkholderia thailandensis (strain ATCC 700388 / DSM 13276 / CCUG 48851 / CIP 106301 / E264), this protein is Bifunctional protein GlmU.